A 120-amino-acid polypeptide reads, in one-letter code: NAD(P)H-quinone oxidoreductase subunit 3, chloroplastic (120 aa).

3 consecutive transmembrane segments (helical) span residues 9-29 (FFWA…FISG), 64-84 (MFAL…PWAM), and 88-108 (VLGV…IIGL).

This sequence belongs to the complex I subunit 3 family. NDH is composed of at least 16 different subunits, 5 of which are encoded in the nucleus.

It is found in the plastid. Its subcellular location is the chloroplast thylakoid membrane. It catalyses the reaction a plastoquinone + NADH + (n+1) H(+)(in) = a plastoquinol + NAD(+) + n H(+)(out). The enzyme catalyses a plastoquinone + NADPH + (n+1) H(+)(in) = a plastoquinol + NADP(+) + n H(+)(out). Its function is as follows. NDH shuttles electrons from NAD(P)H:plastoquinone, via FMN and iron-sulfur (Fe-S) centers, to quinones in the photosynthetic chain and possibly in a chloroplast respiratory chain. The immediate electron acceptor for the enzyme in this species is believed to be plastoquinone. Couples the redox reaction to proton translocation, and thus conserves the redox energy in a proton gradient. This Atropa belladonna (Belladonna) protein is NAD(P)H-quinone oxidoreductase subunit 3, chloroplastic.